The sequence spans 311 residues: Apolipoprotein E (311 aa).

Positions 1 to 18 (MKVWWAVLAAAILAGCRA) are cleaved as a signal peptide. A run of 8 repeats spans residues 74 to 95 (MLMEETMKEVKAYKSELEEQLS), 96 to 116 (PMAQEHRARLSKELQVAGALE), 117 to 138 (ADMEDVCNRLAQYRGEAQAMLG), 139 to 160 (QSTEELARAFSSHLRKLRKRLL), 161 to 182 (RDAEDLQKRMAVYGAGAREGAE), 183 to 204 (RGVSAVRERLGSRLERGRLRVA), 205 to 226 (TVGTLAGRPLRERAQAWGERLR), and 227 to 248 (GHLEEVGSRARDRLNEVREQVE). The tract at residues 74–248 (MLMEETMKEV…RLNEVREQVE (175 aa)) is 8 X 22 AA approximate tandem repeats. The residue at position 136 (M136) is a Methionine sulfoxide. Residue S140 is modified to Phosphoserine. Residues 151 to 161 (HLRKLRKRLLR) form an LDL and other lipoprotein receptors binding region. 155–158 (LRKR) is a heparin binding site. The tract at residues 203–283 (VATVGTLAGR…SWFEPLVEDM (81 aa)) is lipid-binding and lipoprotein association. T205 carries O-linked (GalNAc...) threonine glycosylation. A heparin-binding site is contributed by 222 to 229 (GERLRGHL). The segment at 259-311 (PQMRLQAEAFQARLKSWFEPLVEDMQRQWAGLVEKLQAAMPSKAPAAAPIENQ) is homooligomerization. Positions 271-283 (RLKSWFEPLVEDM) are specificity for association with VLDL.

The protein belongs to the apolipoprotein A1/A4/E family. As to quaternary structure, homotetramer. May interact with ABCA1; functionally associated with ABCA1 in the biogenesis of HDLs. May interact with APP/A4 amyloid-beta peptide; the interaction is extremely stable in vitro but its physiological significance is unclear. May interact with MAPT. May interact with MAP2. In the cerebrospinal fluid, interacts with secreted SORL1. Interacts with PMEL; this allows the loading of PMEL luminal fragment on ILVs to induce fibril nucleation. In terms of processing, APOE exists as multiple glycosylated and sialylated glycoforms within cells and in plasma. The extent of glycosylation and sialylation are tissue and context specific. Glycated in plasma VLDL. Post-translationally, phosphorylated by FAM20C in the extracellular medium.

It localises to the secreted. It is found in the extracellular space. The protein localises to the extracellular matrix. The protein resides in the extracellular vesicle. Its subcellular location is the endosome. It localises to the multivesicular body. Functionally, APOE is an apolipoprotein, a protein associating with lipid particles, that mainly functions in lipoprotein-mediated lipid transport between organs via the plasma and interstitial fluids. APOE is a core component of plasma lipoproteins and is involved in their production, conversion and clearance. Apolipoproteins are amphipathic molecules that interact both with lipids of the lipoprotein particle core and the aqueous environment of the plasma. As such, APOE associates with chylomicrons, chylomicron remnants, very low density lipoproteins (VLDL) and intermediate density lipoproteins (IDL) but shows a preferential binding to high-density lipoproteins (HDL). It also binds a wide range of cellular receptors including the LDL receptor/LDLR and the very low-density lipoprotein receptor/VLDLR that mediate the cellular uptake of the APOE-containing lipoprotein particles. Finally, APOE also has a heparin-binding activity and binds heparan-sulfate proteoglycans on the surface of cells, a property that supports the capture and the receptor-mediated uptake of APOE-containing lipoproteins by cells. The chain is Apolipoprotein E (APOE) from Oryctolagus cuniculus (Rabbit).